A 199-amino-acid chain; its full sequence is FMN-dependent NADH:quinone oxidoreductase 2 (199 aa).

FMN-binding positions include S10, 16–18 (SVS), and 96–99 (MYNF).

Belongs to the azoreductase type 1 family. Homodimer. The cofactor is FMN.

It catalyses the reaction 2 a quinone + NADH + H(+) = 2 a 1,4-benzosemiquinone + NAD(+). The catalysed reaction is N,N-dimethyl-1,4-phenylenediamine + anthranilate + 2 NAD(+) = 2-(4-dimethylaminophenyl)diazenylbenzoate + 2 NADH + 2 H(+). Its function is as follows. Quinone reductase that provides resistance to thiol-specific stress caused by electrophilic quinones. Also exhibits azoreductase activity. Catalyzes the reductive cleavage of the azo bond in aromatic azo compounds to the corresponding amines. This chain is FMN-dependent NADH:quinone oxidoreductase 2, found in Pseudomonas fluorescens (strain Pf0-1).